A 242-amino-acid polypeptide reads, in one-letter code: UDP-2,3-diacylglucosamine hydrolase (242 aa).

5 residues coordinate Mn(2+): Asp8, His10, Asp41, Asn79, and His114. 79–80 (NR) contributes to the substrate binding site. Positions 122, 164, 167, and 195 each coordinate substrate. The Mn(2+) site is built by His195 and His197.

Belongs to the LpxH family. Mn(2+) serves as cofactor.

It is found in the cell inner membrane. The enzyme catalyses UDP-2-N,3-O-bis[(3R)-3-hydroxytetradecanoyl]-alpha-D-glucosamine + H2O = 2-N,3-O-bis[(3R)-3-hydroxytetradecanoyl]-alpha-D-glucosaminyl 1-phosphate + UMP + 2 H(+). The protein operates within glycolipid biosynthesis; lipid IV(A) biosynthesis; lipid IV(A) from (3R)-3-hydroxytetradecanoyl-[acyl-carrier-protein] and UDP-N-acetyl-alpha-D-glucosamine: step 4/6. Hydrolyzes the pyrophosphate bond of UDP-2,3-diacylglucosamine to yield 2,3-diacylglucosamine 1-phosphate (lipid X) and UMP by catalyzing the attack of water at the alpha-P atom. Involved in the biosynthesis of lipid A, a phosphorylated glycolipid that anchors the lipopolysaccharide to the outer membrane of the cell. The chain is UDP-2,3-diacylglucosamine hydrolase from Vibrio cholerae serotype O1 (strain ATCC 39315 / El Tor Inaba N16961).